Reading from the N-terminus, the 489-residue chain is MTFRNCVAVDLGASSGRVMLARYERECRSLTLREIHRFKNGLHSQNGYVTWDVDSLESAIRLGLNKVCEEGIRIDSIGIDTWGVDFVLLDLQGKRVGLPVAYRDSRTNGLMTQAQQQLGKRDIYQRSGIQFLPFNTLYQLRALTEQQPELIPHIAHALLMPDYFSYRLTGKMNWEYTNATTTQLVNINSDDWDESLLAWSGANKAWFGHPTHPGNVIGHWICPQGNEIPVVAVASHDTASAVIASPLNGSRAAYLSSGTWSLMGFESQTPFTNDTALAANITNEGGAEGRYRVLKNIMGLWLLQRVLQERQINDLPALIAATQALPACRFTINPNDDRFINPDEMCSEIQAACRETAQPIPESDAELARCIFDSLALLYADVLHELAQLRGEDFSQLHIVGGGCQNALLNQLCADACGIRVIAGPVEASTLGNIGIQLMTLDELNNVDDFRQVVSTTANLTTFTPNPDSEIAHYVAQIHSTRQTKELCA.

13–17 lines the ATP pocket; it reads ASSGR. Residues Cys68 and Cys222 are joined by a disulfide bond. Residues Gly83 and 236–238 contribute to the substrate site; that span reads HDT. Asp237 functions as the Proton acceptor in the catalytic mechanism. Residue Thr259 coordinates ATP. Residue Asn296 coordinates substrate. Position 304 (Gln304) interacts with ATP. A disulfide bridge connects residues Cys353 and Cys370. Residue Gly402 participates in ATP binding. Cys413 and Cys417 are oxidised to a cystine.

The protein belongs to the rhamnulokinase family. Monomer. The cofactor is Mg(2+).

It carries out the reaction L-rhamnulose + ATP = L-rhamnulose 1-phosphate + ADP + H(+). The protein operates within carbohydrate degradation; L-rhamnose degradation; glycerone phosphate from L-rhamnose: step 2/3. Its function is as follows. Involved in the catabolism of L-rhamnose (6-deoxy-L-mannose). Catalyzes the transfer of the gamma-phosphate group from ATP to the 1-hydroxyl group of L-rhamnulose to yield L-rhamnulose 1-phosphate. In Escherichia coli O7:K1 (strain IAI39 / ExPEC), this protein is Rhamnulokinase.